The primary structure comprises 157 residues: Peptide methionine sulfoxide reductase MsrB (157 aa).

Residues 14–137 (DNDLRERLTP…NSAALRFVPL (124 aa)) enclose the MsrB domain. C126 functions as the Nucleophile in the catalytic mechanism.

Belongs to the MsrB Met sulfoxide reductase family.

The enzyme catalyses L-methionyl-[protein] + [thioredoxin]-disulfide + H2O = L-methionyl-(R)-S-oxide-[protein] + [thioredoxin]-dithiol. The sequence is that of Peptide methionine sulfoxide reductase MsrB from Deinococcus radiodurans (strain ATCC 13939 / DSM 20539 / JCM 16871 / CCUG 27074 / LMG 4051 / NBRC 15346 / NCIMB 9279 / VKM B-1422 / R1).